The following is a 355-amino-acid chain: Mitogen-activated protein kinase (355 aa).

The 289-residue stretch at 23-311 folds into the Protein kinase domain; sequence YDIQDVVGEG…VEEALKHPYL (289 aa). ATP is bound by residues 29–37 and lysine 52; that span reads VGEGAYGVV. Aspartate 147 (proton acceptor) is an active-site residue. Threonine 183 is subject to Phosphothreonine. Positions 183 to 185 match the TXY motif; that stretch reads TEY. Tyrosine 185 is modified (phosphotyrosine).

It belongs to the protein kinase superfamily. CMGC Ser/Thr protein kinase family. MAP kinase subfamily. Post-translationally, dually phosphorylated on Thr-183 and Tyr-185, which activates the enzyme.

The protein localises to the nucleus. It catalyses the reaction L-seryl-[protein] + ATP = O-phospho-L-seryl-[protein] + ADP + H(+). The catalysed reaction is L-threonyl-[protein] + ATP = O-phospho-L-threonyl-[protein] + ADP + H(+). Its activity is regulated as follows. Activated by tyrosine and threonine phosphorylation. Responds to activation by environmental stress by phosphorylating downstream targets. The sequence is that of Mitogen-activated protein kinase (MAPK) from Fusarium vanettenii (Neocosmospora pisi).